A 511-amino-acid chain; its full sequence is GMP synthase [glutamine-hydrolyzing] (511 aa).

Residues isoleucine 5–aspartate 195 form the Glutamine amidotransferase type-1 domain. Catalysis depends on cysteine 82, which acts as the Nucleophile. Catalysis depends on residues histidine 169 and glutamate 171. In terms of domain architecture, GMPS ATP-PPase spans tryptophan 196–arginine 386. Serine 223–serine 229 contributes to the ATP binding site.

Homodimer.

It carries out the reaction XMP + L-glutamine + ATP + H2O = GMP + L-glutamate + AMP + diphosphate + 2 H(+). It functions in the pathway purine metabolism; GMP biosynthesis; GMP from XMP (L-Gln route): step 1/1. In terms of biological role, catalyzes the synthesis of GMP from XMP. The protein is GMP synthase [glutamine-hydrolyzing] of Caldicellulosiruptor saccharolyticus (strain ATCC 43494 / DSM 8903 / Tp8T 6331).